The primary structure comprises 263 residues: Small ribosomal subunit protein eS4 (263 aa).

The 63-residue stretch at 42-104 folds into the S4 RNA-binding domain; that stretch reads LPLVIFLRNR…TNELFRLIYD (63 aa).

It belongs to the eukaryotic ribosomal protein eS4 family.

In Bombyx mori (Silk moth), this protein is Small ribosomal subunit protein eS4 (RpS4).